We begin with the raw amino-acid sequence, 345 residues long: Guanine nucleotide-binding protein G(i) subunit alpha-3 (345 aa).

The G-alpha domain maps to Lys-23–Tyr-345. The segment at Lys-26–Thr-39 is G1 motif. Residues Gly-33, Glu-34, Ser-35, Gly-36, Lys-37, Ser-38, Thr-39, Asp-141, Ser-142, Leu-166, Arg-167, Thr-168, Arg-169, Val-170, Lys-171, Thr-172, Val-192, Gly-194, Asn-260, Lys-261, Asp-263, Leu-264, Cys-316, Ala-317, and Thr-318 each coordinate GTP. Ser-38 lines the Mg(2+) pocket. Positions Asp-164–Thr-172 are G2 motif. A Mg(2+)-binding site is contributed by Thr-172. The interval Phe-187–Arg-196 is G3 motif. A G4 motif region spans residues Ile-256 to Asp-263. The tract at residues Thr-315–Thr-320 is G5 motif.

Belongs to the G-alpha family. G(i/o/t/z) subfamily. In terms of assembly, heterotrimeric G proteins are composed of 3 units; alpha, beta and gamma. The alpha subunit contains the guanine nucleotide binding site. GTP binding causes dissociation of the heterotrimer, liberating the individual subunits so that they can interact with downstream effector proteins.

It localises to the cytoplasm. The protein resides in the cell membrane. Its subcellular location is the cytoskeleton. It is found in the microtubule organizing center. The protein localises to the centrosome. It localises to the membrane. In terms of biological role, heterotrimeric guanine nucleotide-binding proteins (G proteins) function as transducers downstream of G protein-coupled receptors (GPCRs) in numerous signaling cascades. The alpha chain contains the guanine nucleotide binding site and alternates between an active, GTP-bound state and an inactive, GDP-bound state. Signaling by an activated GPCR promotes GDP release and GTP binding. The alpha subunit has a low GTPase activity that converts bound GTP to GDP, thereby terminating the signal. Both GDP release and GTP hydrolysis are modulated by numerous regulatory proteins. Signaling is mediated via effector proteins, such as adenylate cyclase. Inhibits adenylate cyclase activity, leading to decreased intracellular cAMP levels. Stimulates the activity of receptor-regulated K(+) channels. The active GTP-bound form prevents the association of RGS14 with centrosomes and is required for the translocation of RGS14 from the cytoplasm to the plasma membrane. May play a role in cell division. The active GTP-bound form activates the calcium permeant TRPC5 ion channels. This chain is Guanine nucleotide-binding protein G(i) subunit alpha-3 (gnai3), found in Xenopus laevis (African clawed frog).